The following is a 363-amino-acid chain: 3-isopropylmalate dehydrogenase (363 aa).

79 to 92 is an NAD(+) binding site; sequence GPKWEHLPPNDQPE. Residues Arg100, Arg110, Arg139, and Asp228 each contribute to the substrate site. Mg(2+) contacts are provided by Asp228, Asp252, and Asp256. 286 to 298 lines the NAD(+) pocket; the sequence is GSAPDIAGKNIAN.

The protein belongs to the isocitrate and isopropylmalate dehydrogenases family. LeuB type 1 subfamily. As to quaternary structure, homodimer. It depends on Mg(2+) as a cofactor. Mn(2+) is required as a cofactor.

It is found in the cytoplasm. It catalyses the reaction (2R,3S)-3-isopropylmalate + NAD(+) = 4-methyl-2-oxopentanoate + CO2 + NADH. The protein operates within amino-acid biosynthesis; L-leucine biosynthesis; L-leucine from 3-methyl-2-oxobutanoate: step 3/4. Functionally, catalyzes the oxidation of 3-carboxy-2-hydroxy-4-methylpentanoate (3-isopropylmalate) to 3-carboxy-4-methyl-2-oxopentanoate. The product decarboxylates to 4-methyl-2 oxopentanoate. This Vibrio vulnificus (strain YJ016) protein is 3-isopropylmalate dehydrogenase.